The chain runs to 267 residues: Proenkephalin-A (267 aa).

The signal sequence occupies residues 1-24; that stretch reads MARFLTLCTWLLLLGPGLLATVRA. 3 disulfide bridges follow: Cys26/Cys48, Cys30/Cys52, and Cys33/Cys65. Basic and acidic residues predominate over residues 163 to 175; it reads TGDNRERSHHQDG. The tract at residues 163–182 is disordered; the sequence is TGDNRERSHHQDGSDNEEEV. Propeptides lie at residues 196-207 and 217-227; these read SPQLEDEAKELQ and VGRPEWWMDYQ. At Ser251 the chain carries Phosphoserine.

It belongs to the opioid neuropeptide precursor family. Post-translationally, proenkephalin-A is cleaved by CTSL to generate Met-enkephalin. Processed and degraded by ACE. In terms of processing, probably cleaved by ACE. Post-translationally, processed by ACE to generate Met-enkephalin in the nucleus accumbens of the brain. The N-terminal domain contains 6 conserved cysteines thought to be involved in disulfide bonding and/or processing.

It is found in the cytoplasmic vesicle. It localises to the secretory vesicle. The protein localises to the chromaffin granule lumen. The protein resides in the secreted. Functionally, neuropeptide that competes with and mimic the effects of opiate drugs. They play a role in a number of physiologic functions, including pain perception and responses to stress. Met-enkephalin-Arg-Phe neuropeptide acts as a strong ligand of Mu-type opioid receptor OPRM1. Met-enkephalin-Arg-Phe-binding to OPRM1 in the nucleus accumbens of the brain increases activation of OPRM1, leading to long-term synaptic depression of glutamate release. Its function is as follows. Increases glutamate release in the striatum and decreases GABA concentration in the striatum. In terms of biological role, increases glutamate release in the striatum. The polypeptide is Proenkephalin-A (Homo sapiens (Human)).